The sequence spans 167 residues: Transcription antitermination protein NusB (167 aa).

Residues 1 to 21 are disordered; the sequence is MIPTDTAPPSKPAQGHKGYKN.

The protein belongs to the NusB family.

Its function is as follows. Involved in transcription antitermination. Required for transcription of ribosomal RNA (rRNA) genes. Binds specifically to the boxA antiterminator sequence of the ribosomal RNA (rrn) operons. The protein is Transcription antitermination protein NusB of Nitrosomonas eutropha (strain DSM 101675 / C91 / Nm57).